We begin with the raw amino-acid sequence, 147 residues long: Prefoldin subunit alpha (147 aa).

It belongs to the prefoldin alpha subunit family. Heterohexamer of two alpha and four beta subunits.

It is found in the cytoplasm. Functionally, molecular chaperone capable of stabilizing a range of proteins. Seems to fulfill an ATP-independent, HSP70-like function in archaeal de novo protein folding. The sequence is that of Prefoldin subunit alpha from Methanocorpusculum labreanum (strain ATCC 43576 / DSM 4855 / Z).